We begin with the raw amino-acid sequence, 347 residues long: NADH-ubiquinone oxidoreductase chain 2 (347 aa).

The next 10 membrane-spanning stretches (helical) occupy residues 3–23 (PPIL…VMLS), 25–45 (HWLL…PILM), 66–86 (ASML…QWVI), 93–115 (IASI…HFWV), 149–169 (INTN…GWGG), 178–198 (IMAY…TYNP), 201–221 (MILN…LFML), 237–257 (FPLI…LPPL), 274–294 (NMII…YFYL), and 325–345 (LLPP…MLSV).

It belongs to the complex I subunit 2 family. In terms of assembly, core subunit of respiratory chain NADH dehydrogenase (Complex I) which is composed of 45 different subunits. Interacts with TMEM242.

The protein localises to the mitochondrion inner membrane. It catalyses the reaction a ubiquinone + NADH + 5 H(+)(in) = a ubiquinol + NAD(+) + 4 H(+)(out). Functionally, core subunit of the mitochondrial membrane respiratory chain NADH dehydrogenase (Complex I) which catalyzes electron transfer from NADH through the respiratory chain, using ubiquinone as an electron acceptor. Essential for the catalytic activity and assembly of complex I. This Canis lupus (Gray wolf) protein is NADH-ubiquinone oxidoreductase chain 2.